Here is a 528-residue protein sequence, read N- to C-terminus: Glucose transporter 1E (528 aa).

The disordered stretch occupies residues 1 to 22 (MTERRDNVSHAPDAIEGPNDGA). Over 1–43 (MTERRDNVSHAPDAIEGPNDGAHAEETSPGFFSFENLGVAQVQ) the chain is Cytoplasmic. A helical transmembrane segment spans residues 44–64 (VVGGTLNGYVIGYVAVYLLLY). Residues 65–118 (LTATECKFTTEGACGGRKIYGCKWSGTTCKFENPKCSEGSDPSDSCKNEVAYTS) are Extracellular-facing. The helical transmembrane segment at 119–139 (VYSGIFACAMIVGSMVGSIIA) threads the bilayer. Residues 140–151 (GKCITTFGLKKS) are Cytoplasmic-facing. A helical membrane pass occupies residues 152-172 (FIIVSITCTIACVVVQVAIEY). Residues 173-175 (NNY) lie on the Extracellular side of the membrane. A helical transmembrane segment spans residues 176 to 196 (YALCTGRVLIGLGVGILCSVF). Residues 197 to 213 (PMYVNENAHPKLCKMDG) lie on the Cytoplasmic side of the membrane. The helical transmembrane segment at 214 to 234 (VLFQVFTTLGIMLAAMLGLIL) threads the bilayer. Topologically, residues 235–250 (DKTGASKEEANMAGRL) are extracellular. The helical transmembrane segment at 251 to 271 (HVFSAVPLGLSVAMFLVGMFL) threads the bilayer. At 272-301 (RESTATFAQDDDGKADGGMDPNEYGWGQML) the chain is on the cytoplasmic side. The helical transmembrane segment at 302-322 (WPLFMGAVTAGTLQLTGINAV) threads the bilayer. Over 323-338 (MNYAPKITENLGMDPS) the chain is Extracellular. A helical transmembrane segment spans residues 339 to 359 (LGNFLVMAWNFVTSLVAIPLA). The Cytoplasmic segment spans residues 360–367 (SRFTMRQM). Residues 368-388 (FITCSFVASCMCLFLCGIPVF) traverse the membrane as a helical segment. At 389 to 403 (PGVAEEKVKNGVATT) the chain is on the extracellular side. A helical transmembrane segment spans residues 404–424 (GIALFIAAFEFGVGSCFFVLA). The Cytoplasmic portion of the chain corresponds to 425–438 (QDLFPPSFRPKGSS). A helical membrane pass occupies residues 439 to 459 (FVVMMQFIFNILINLLYPITT). Over 460–475 (EAISGGATGDQDKGQA) the chain is Extracellular. A helical membrane pass occupies residues 476–496 (VVFILFGLIGLICFVLQFFYL). The Cytoplasmic portion of the chain corresponds to 497–528 (YPYDANQDHENDHGTEPVERILSPVDVPTPRN). Residues 507 to 528 (NDHGTEPVERILSPVDVPTPRN) are disordered.

The protein belongs to the major facilitator superfamily. Sugar transporter (TC 2.A.1.1) family.

It localises to the membrane. Functionally, facilitative glucose transporter. The chain is Glucose transporter 1E (THT1E) from Trypanosoma brucei brucei.